The primary structure comprises 319 residues: Urease accessory protein UreD (319 aa).

Residues 254 to 273 (PDPVGSPAARRESVPAKRAE) form a disordered region. Residues 262–273 (ARRESVPAKRAE) are compositionally biased toward basic and acidic residues.

Belongs to the UreD family. As to quaternary structure, ureD, UreF and UreG form a complex that acts as a GTP-hydrolysis-dependent molecular chaperone, activating the urease apoprotein by helping to assemble the nickel containing metallocenter of UreC. The UreE protein probably delivers the nickel.

Its subcellular location is the cytoplasm. Required for maturation of urease via the functional incorporation of the urease nickel metallocenter. This is Urease accessory protein UreD from Frankia casuarinae (strain DSM 45818 / CECT 9043 / HFP020203 / CcI3).